A 342-amino-acid chain; its full sequence is Sesquiterpene synthase MBR_09977 (342 aa).

Mg(2+) contacts are provided by D91 and D96. The DDXXXD motif signature appears at 91–96 (DDLFVD). Substrate is bound at residue R184. N230, S234, and E238 together coordinate Mg(2+).

Belongs to the terpene synthase family. Mg(2+) is required as a cofactor.

It carries out the reaction (2E,6E)-farnesyl diphosphate + H2O = (+)-corvol ether B + diphosphate. The catalysed reaction is (2E,6E)-farnesyl diphosphate + H2O = (+)-corvol ether A + diphosphate. Functionally, terpene synthase that catalyzes the conversion of (2E,6E)-farnesyl diphosphate (FPP) into sesquiterpenes which are important for fungi-environment interactions. Produces a mixture consisting of 8 sesquiterpenes including corvol ethers A and B, as well as traces of epizonarene, gamma-cadinene, delta-cadinene, alpha-cadinene, alpha-cadinol, and an unidentified sesquiterpene. The major product is corvol ether A. This chain is Sesquiterpene synthase MBR_09977, found in Metarhizium brunneum (strain ARSEF 3297).